The primary structure comprises 320 residues: Small ribosomal subunit protein mS35 (320 aa).

The segment at 24–63 is disordered; that stretch reads SVASPAAPRAGPRTASRSERPMRRKALPPRTEKMDTDQDW.

It belongs to the mitochondrion-specific ribosomal protein mS35 family. In terms of assembly, component of the mitochondrial ribosome small subunit (28S) which comprises a 12S rRNA and about 30 distinct proteins.

Its subcellular location is the mitochondrion. The protein is Small ribosomal subunit protein mS35 of Mus musculus (Mouse).